Consider the following 400-residue polypeptide: MRASKSDRFLMSSWVKLLFVAVIMYICSAVVPMAATYEGLGFPCYFNNLVNYSALNLTVRNSAKHLTPTLFLEKPEMLVYIFWTFIVDGIAIVYYCLAAVAVYRAKHVHATTMMSMQSWIALLGSHSVLYVAILRMWSMQLFIHVLSYKHVLMAAFVYCIHFCISFAHIQSLITCNSAQWEIPLLEQHVPDNTMMESLLTRWKPVCVNLYLSTTALEMLLFSLSTMMAVGNSFYVLVSDAIFGAVNMFLALTVVWYINTEFFLVKFMRRQVGFYVGVFVGYLILLLPVIRYENAFVQANLHYIVAINISCIPILCILAIVIRVIRSDWGLCTPSAAYMPLATSAPTVDRTPTVHQKPPPLPAKTRARAKVKDISTPAPRTQYQSDHESDSEIDETQMIFI.

The Intravirion portion of the chain corresponds to 1–16 (MRASKSDRFLMSSWVK). A helical transmembrane segment spans residues 17–37 (LLFVAVIMYICSAVVPMAATY). At 38 to 76 (EGLGFPCYFNNLVNYSALNLTVRNSAKHLTPTLFLEKPE) the chain is on the virion surface side. Residues 77 to 97 (MLVYIFWTFIVDGIAIVYYCL) traverse the membrane as a helical segment. Residues 98–113 (AAVAVYRAKHVHATTM) lie on the Intravirion side of the membrane. Residues 114–134 (MSMQSWIALLGSHSVLYVAIL) traverse the membrane as a helical segment. The Virion surface segment spans residues 135-152 (RMWSMQLFIHVLSYKHVL). Residues 153–173 (MAAFVYCIHFCISFAHIQSLI) form a helical membrane-spanning segment. Residues 174-208 (TCNSAQWEIPLLEQHVPDNTMMESLLTRWKPVCVN) are Intravirion-facing. Residues 209–229 (LYLSTTALEMLLFSLSTMMAV) traverse the membrane as a helical segment. Residues 230 to 234 (GNSFY) lie on the Virion surface side of the membrane. The helical transmembrane segment at 235 to 255 (VLVSDAIFGAVNMFLALTVVW) threads the bilayer. The Intravirion segment spans residues 256–270 (YINTEFFLVKFMRRQ). The helical transmembrane segment at 271-291 (VGFYVGVFVGYLILLLPVIRY) threads the bilayer. The Virion surface segment spans residues 292 to 300 (ENAFVQANL). A helical membrane pass occupies residues 301 to 321 (HYIVAINISCIPILCILAIVI). The Intravirion segment spans residues 322-400 (RVIRSDWGLC…EIDETQMIFI (79 aa)). A disordered region spans residues 348-394 (DRTPTVHQKPPPLPAKTRARAKVKDISTPAPRTQYQSDHESDSEIDE).

The protein belongs to the herpesviridae glycoprotein M family. As to quaternary structure, interacts (via N-terminus) with gN (via N-terminus). The gM-gN heterodimer forms the gCII complex. N-glycosylated.

The protein resides in the virion membrane. It localises to the host Golgi apparatus. Its subcellular location is the host trans-Golgi network. The protein localises to the host endosome membrane. It is found in the host nucleus inner membrane. In terms of biological role, envelope glycoprotein important for virion assembly and egress. Plays a role in the correct incorporation of gH-gL into virion membrane. Directs the glycoprotein N (gN) to the host trans-Golgi network. This chain is Envelope glycoprotein M, found in Homo sapiens (Human).